A 628-amino-acid chain; its full sequence is Probable alpha-L-arabinofuranosidase A (628 aa).

An N-terminal signal peptide occupies residues 1-25; sequence MVAFSALSGVSAVSLLLSLVQNAHG. Residues Asn36, Asn51, Asn74, Asn152, Asn171, Asn260, Asn359, Asn440, Asn493, and Asn610 are each glycosylated (N-linked (GlcNAc...) asparagine).

This sequence belongs to the glycosyl hydrolase 51 family.

It is found in the secreted. It catalyses the reaction Hydrolysis of terminal non-reducing alpha-L-arabinofuranoside residues in alpha-L-arabinosides.. It participates in glycan metabolism; L-arabinan degradation. Its function is as follows. Alpha-L-arabinofuranosidase involved in the degradation of arabinoxylan, a major component of plant hemicellulose. Acts only on small linear 1,5-alpha-linked L-arabinofuranosyl oligosaccharides. In Aspergillus niger (strain ATCC MYA-4892 / CBS 513.88 / FGSC A1513), this protein is Probable alpha-L-arabinofuranosidase A (abfA).